Consider the following 422-residue polypeptide: GTPase Obg (422 aa).

An Obg domain is found at 4–161 (LHFVDEAFNE…FKIKTELKVL (158 aa)). One can recognise an OBG-type G domain in the interval 162–327 (ADIGLLGFPS…LKYEMSSLLQ (166 aa)). GTP contacts are provided by residues 168 to 175 (GFPSVGKS), 193 to 197 (FTTIK), 214 to 217 (DLPG), 281 to 284 (NKMD), and 308 to 310 (SLV). Mg(2+) contacts are provided by Ser175 and Thr195. One can recognise an OCT domain in the interval 345–422 (TLPDNQNTIS…KICDRLFYFL (78 aa)).

It belongs to the TRAFAC class OBG-HflX-like GTPase superfamily. OBG GTPase family. As to quaternary structure, monomer. It depends on Mg(2+) as a cofactor.

It is found in the cytoplasm. Functionally, an essential GTPase which binds GTP, GDP and possibly (p)ppGpp with moderate affinity, with high nucleotide exchange rates and a fairly low GTP hydrolysis rate. Plays a role in control of the cell cycle, stress response, ribosome biogenesis and in those bacteria that undergo differentiation, in morphogenesis control. The protein is GTPase Obg of Onion yellows phytoplasma (strain OY-M).